Reading from the N-terminus, the 330-residue chain is Ketol-acid reductoisomerase (NADP(+)) (330 aa).

Residues 1 to 181 (MKVFYDSDFK…GLSRAGVIQT (181 aa)) form the KARI N-terminal Rossmann domain. NADP(+)-binding positions include 24-27 (YGSQ), R47, S52, and 82-85 (DELQ). Residue H107 is part of the active site. An NADP(+)-binding site is contributed by G133. Residues 182–327 (TFKEETETDL…AKLRKMCGLE (146 aa)) enclose the KARI C-terminal knotted domain. 4 residues coordinate Mg(2+): D190, E194, E226, and E230. Residue S251 participates in substrate binding.

The protein belongs to the ketol-acid reductoisomerase family. The cofactor is Mg(2+).

It catalyses the reaction (2R)-2,3-dihydroxy-3-methylbutanoate + NADP(+) = (2S)-2-acetolactate + NADPH + H(+). The catalysed reaction is (2R,3R)-2,3-dihydroxy-3-methylpentanoate + NADP(+) = (S)-2-ethyl-2-hydroxy-3-oxobutanoate + NADPH + H(+). It functions in the pathway amino-acid biosynthesis; L-isoleucine biosynthesis; L-isoleucine from 2-oxobutanoate: step 2/4. Its pathway is amino-acid biosynthesis; L-valine biosynthesis; L-valine from pyruvate: step 2/4. Involved in the biosynthesis of branched-chain amino acids (BCAA). Catalyzes an alkyl-migration followed by a ketol-acid reduction of (S)-2-acetolactate (S2AL) to yield (R)-2,3-dihydroxy-isovalerate. In the isomerase reaction, S2AL is rearranged via a Mg-dependent methyl migration to produce 3-hydroxy-3-methyl-2-ketobutyrate (HMKB). In the reductase reaction, this 2-ketoacid undergoes a metal-dependent reduction by NADPH to yield (R)-2,3-dihydroxy-isovalerate. The protein is Ketol-acid reductoisomerase (NADP(+)) of Methanococcus maripaludis (strain DSM 14266 / JCM 13030 / NBRC 101832 / S2 / LL).